Here is a 316-residue protein sequence, read N- to C-terminus: tRNA dimethylallyltransferase (316 aa).

An ATP-binding site is contributed by 17–24 (GPTASGKT). Residue 19 to 24 (TASGKT) coordinates substrate. 3 interaction with substrate tRNA regions span residues 42–45 (DSAL), 166–170 (QRLSR), and 247–252 (RCVGYR).

Belongs to the IPP transferase family. Monomer. It depends on Mg(2+) as a cofactor.

It carries out the reaction adenosine(37) in tRNA + dimethylallyl diphosphate = N(6)-dimethylallyladenosine(37) in tRNA + diphosphate. Functionally, catalyzes the transfer of a dimethylallyl group onto the adenine at position 37 in tRNAs that read codons beginning with uridine, leading to the formation of N6-(dimethylallyl)adenosine (i(6)A). This Salmonella newport (strain SL254) protein is tRNA dimethylallyltransferase.